Consider the following 270-residue polypeptide: Formamidopyrimidine-DNA glycosylase (270 aa).

P2 functions as the Schiff-base intermediate with DNA in the catalytic mechanism. Residue E3 is the Proton donor of the active site. The active-site Proton donor; for beta-elimination activity is the K58. The DNA site is built by H91, R110, and K151. An FPG-type zinc finger spans residues F236–R270. The Proton donor; for delta-elimination activity role is filled by R260.

It belongs to the FPG family. As to quaternary structure, monomer. Zn(2+) is required as a cofactor.

It carries out the reaction Hydrolysis of DNA containing ring-opened 7-methylguanine residues, releasing 2,6-diamino-4-hydroxy-5-(N-methyl)formamidopyrimidine.. The catalysed reaction is 2'-deoxyribonucleotide-(2'-deoxyribose 5'-phosphate)-2'-deoxyribonucleotide-DNA = a 3'-end 2'-deoxyribonucleotide-(2,3-dehydro-2,3-deoxyribose 5'-phosphate)-DNA + a 5'-end 5'-phospho-2'-deoxyribonucleoside-DNA + H(+). In terms of biological role, involved in base excision repair of DNA damaged by oxidation or by mutagenic agents. Acts as a DNA glycosylase that recognizes and removes damaged bases. Has a preference for oxidized purines, such as 7,8-dihydro-8-oxoguanine (8-oxoG). Has AP (apurinic/apyrimidinic) lyase activity and introduces nicks in the DNA strand. Cleaves the DNA backbone by beta-delta elimination to generate a single-strand break at the site of the removed base with both 3'- and 5'-phosphates. The sequence is that of Formamidopyrimidine-DNA glycosylase from Pseudomonas syringae pv. tomato (strain ATCC BAA-871 / DC3000).